The following is a 344-amino-acid chain: L-rhamnose-proton symporter (344 aa).

Helical transmembrane passes span 4-24, 38-58, 68-88, 101-121, 131-151, 175-195, 214-234, 259-279, 290-310, and 323-343; these read AITM…CFYA, WSVG…ATLL, FSAS…IGNI, MGIG…TPII, TQGG…VGIV, LLLA…MNAA, LPSY…FCFI, LLLS…YAWG, MSWM…GLVL, and VLSL…LGMA.

Belongs to the L-rhamnose transporter (TC 2.A.7.6) family.

It is found in the cell inner membrane. The catalysed reaction is L-rhamnopyranose(in) + H(+)(in) = L-rhamnopyranose(out) + H(+)(out). Functionally, uptake of L-rhamnose across the cytoplasmic membrane with the concomitant transport of protons into the cell (symport system). In Klebsiella pneumoniae subsp. pneumoniae (strain ATCC 700721 / MGH 78578), this protein is L-rhamnose-proton symporter.